The primary structure comprises 316 residues: Ribose-phosphate pyrophosphokinase (316 aa).

Residues 41 to 43 (DGE) and 100 to 101 (RQ) contribute to the ATP site. Mg(2+) is bound by residues His-134 and Asp-174. Residue Lys-197 is part of the active site. Residues Arg-199, Asp-223, and 227-231 (DTAGT) each bind D-ribose 5-phosphate.

The protein belongs to the ribose-phosphate pyrophosphokinase family. Class I subfamily. As to quaternary structure, homohexamer. The cofactor is Mg(2+).

The protein localises to the cytoplasm. The catalysed reaction is D-ribose 5-phosphate + ATP = 5-phospho-alpha-D-ribose 1-diphosphate + AMP + H(+). The protein operates within metabolic intermediate biosynthesis; 5-phospho-alpha-D-ribose 1-diphosphate biosynthesis; 5-phospho-alpha-D-ribose 1-diphosphate from D-ribose 5-phosphate (route I): step 1/1. Involved in the biosynthesis of the central metabolite phospho-alpha-D-ribosyl-1-pyrophosphate (PRPP) via the transfer of pyrophosphoryl group from ATP to 1-hydroxyl of ribose-5-phosphate (Rib-5-P). In Caldanaerobacter subterraneus subsp. tengcongensis (strain DSM 15242 / JCM 11007 / NBRC 100824 / MB4) (Thermoanaerobacter tengcongensis), this protein is Ribose-phosphate pyrophosphokinase.